The sequence spans 268 residues: Undecaprenyl-diphosphatase (268 aa).

8 helical membrane passes run 1 to 21 (MSLI…FLPI), 39 to 59 (QGPL…LVYF), 85 to 105 (ALLV…LVAF), 110 to 130 (ALRS…PLWL), 144 to 164 (MSFK…IPGA), 187 to 207 (FSML…LIEL), 221 to 241 (DGLI…AVLM), and 247 to 267 (IGFL…LVFF).

This sequence belongs to the UppP family.

It is found in the cell inner membrane. The enzyme catalyses di-trans,octa-cis-undecaprenyl diphosphate + H2O = di-trans,octa-cis-undecaprenyl phosphate + phosphate + H(+). Catalyzes the dephosphorylation of undecaprenyl diphosphate (UPP). Confers resistance to bacitracin. This Maricaulis maris (strain MCS10) (Caulobacter maris) protein is Undecaprenyl-diphosphatase.